The sequence spans 624 residues: DNA mismatch repair protein MutL (624 aa).

The interval Gly336 to Arg357 is disordered. A compositionally biased stretch (low complexity) spans Asp344–His353.

Belongs to the DNA mismatch repair MutL/HexB family.

In terms of biological role, this protein is involved in the repair of mismatches in DNA. It is required for dam-dependent methyl-directed DNA mismatch repair. May act as a 'molecular matchmaker', a protein that promotes the formation of a stable complex between two or more DNA-binding proteins in an ATP-dependent manner without itself being part of a final effector complex. The polypeptide is DNA mismatch repair protein MutL (Chlorobium phaeobacteroides (strain BS1)).